The following is a 561-amino-acid chain: Transmembrane protein 209 (561 aa).

2 positions are modified to phosphoserine: Ser-9 and Ser-11. A helical transmembrane segment spans residues Val-28–Thr-48. Asn-57 carries N-linked (GlcNAc...) asparagine glycosylation. The chain crosses the membrane as a helical span at residues Tyr-60–Phe-80. Ser-98 carries the post-translational modification Phosphoserine. 2 disordered regions span residues Asp-119 to Ser-157 and Phe-195 to Asp-234. Low complexity predominate over residues Ser-133–Ser-157. Residues Ser-201, Ser-222, and Ser-248 each carry the phosphoserine modification. Over residues Arg-220–Pro-229 the composition is skewed to polar residues. The segment at Glu-250–Thr-271 is disordered. The segment covering Ser-260–Thr-271 has biased composition (low complexity). Asn-274 carries N-linked (GlcNAc...) asparagine glycosylation. Ser-278 is subject to Phosphoserine.

Interacts with NUP205. In terms of tissue distribution, expressed in the testis.

It is found in the membrane. The protein localises to the nucleus envelope. Its subcellular location is the golgi apparatus. The protein resides in the cytoplasm. Nuclear envelope protein which in association with NUP205, may be involved in nuclear transport of various nuclear proteins in addition to MYC. In Homo sapiens (Human), this protein is Transmembrane protein 209 (TMEM209).